We begin with the raw amino-acid sequence, 221 residues long: Histone H1.3 (221 aa).

The segment covering 1-17 has biased composition (low complexity); sequence MSETAPAAPAAPAPVEK. Positions 1–42 are disordered; that stretch reads MSETAPAAPAAPAPVEKTPVKKKAKKTGAAAGKRKASGPPVS. Residue serine 2 is modified to N-acetylserine. The residue at position 2 (serine 2) is a Phosphoserine. Lysine 17 carries the N6-acetyllysine modification. Position 18 is a phosphothreonine (threonine 18). A compositionally biased stretch (basic residues) spans 20-36; the sequence is VKKKAKKTGAAAGKRKA. An N6-(beta-hydroxybutyryl)lysine mark is found at lysine 33, lysine 35, and lysine 53. Residues 37-110 form the H15 domain; sequence SGPPVSELIT…GASGSFKLNK (74 aa). Citrulline is present on arginine 55. 3 positions are modified to N6-(beta-hydroxybutyryl)lysine: lysine 65, lysine 86, and lysine 91. The disordered stretch occupies residues 92–221; that stretch reads GTLVQTKGTG…KAKKAAPRKK (130 aa). Serine 105 is subject to Phosphoserine; by PKC. Lysine 107 and lysine 141 each carry N6-(beta-hydroxybutyryl)lysine. Composition is skewed to basic residues over residues 120-141, 150-161, 170-187, and 194-221; these read KAKK…KPKK, KTAKKTPKKAKK, KVSK…KKAA, and KAPK…PRKK.

Belongs to the histone H1/H5 family. H1 histones are progressively phosphorylated during the cell cycle, becoming maximally phosphorylated during late G2 phase and M phase, and being dephosphorylated sharply thereafter. In terms of processing, hydroxybutyrylation of histones is induced by starvation. Post-translationally, citrullination at Arg-55 (H1R54ci) by PADI4 takes place within the DNA-binding site of H1 and results in its displacement from chromatin and global chromatin decondensation, thereby promoting pluripotency and stem cell maintenance.

Its subcellular location is the nucleus. The protein localises to the chromosome. Histone H1 protein binds to linker DNA between nucleosomes forming the macromolecular structure known as the chromatin fiber. Histones H1 are necessary for the condensation of nucleosome chains into higher-order structured fibers. Also acts as a regulator of individual gene transcription through chromatin remodeling, nucleosome spacing and DNA methylation. The sequence is that of Histone H1.3 from Mus musculus (Mouse).